Consider the following 166-residue polypeptide: NAD(P)H-quinone oxidoreductase subunit I, chloroplastic (166 aa).

2 4Fe-4S ferredoxin-type domains span residues 55–84 (GRIHFEFDKCIACEVCVRVCPIDLPVVDWK) and 95–124 (LNYSIDFGICIFCGNCVEYCPTNCLSMTEE). [4Fe-4S] cluster is bound by residues Cys-64, Cys-67, Cys-70, Cys-74, Cys-104, Cys-107, Cys-110, and Cys-114.

Belongs to the complex I 23 kDa subunit family. In terms of assembly, NDH is composed of at least 16 different subunits, 5 of which are encoded in the nucleus. Requires [4Fe-4S] cluster as cofactor.

The protein resides in the plastid. It is found in the chloroplast thylakoid membrane. The enzyme catalyses a plastoquinone + NADH + (n+1) H(+)(in) = a plastoquinol + NAD(+) + n H(+)(out). The catalysed reaction is a plastoquinone + NADPH + (n+1) H(+)(in) = a plastoquinol + NADP(+) + n H(+)(out). NDH shuttles electrons from NAD(P)H:plastoquinone, via FMN and iron-sulfur (Fe-S) centers, to quinones in the photosynthetic chain and possibly in a chloroplast respiratory chain. The immediate electron acceptor for the enzyme in this species is believed to be plastoquinone. Couples the redox reaction to proton translocation, and thus conserves the redox energy in a proton gradient. This is NAD(P)H-quinone oxidoreductase subunit I, chloroplastic from Acanthospermum australe (Paraguayan starburr).